Reading from the N-terminus, the 235-residue chain is Orotidine 5'-phosphate decarboxylase (235 aa).

Substrate contacts are provided by residues aspartate 12, lysine 34, 61 to 70, threonine 116, arginine 177, glutamine 186, glycine 206, and arginine 207; that span reads DMKLLDIDNT. The active-site Proton donor is the lysine 63.

The protein belongs to the OMP decarboxylase family. Type 1 subfamily. Homodimer.

The enzyme catalyses orotidine 5'-phosphate + H(+) = UMP + CO2. It participates in pyrimidine metabolism; UMP biosynthesis via de novo pathway; UMP from orotate: step 2/2. Catalyzes the decarboxylation of orotidine 5'-monophosphate (OMP) to uridine 5'-monophosphate (UMP). The sequence is that of Orotidine 5'-phosphate decarboxylase from Rhizobium etli (strain ATCC 51251 / DSM 11541 / JCM 21823 / NBRC 15573 / CFN 42).